We begin with the raw amino-acid sequence, 1173 residues long: DNA-directed RNA polymerase subunit beta (1173 aa).

The disordered stretch occupies residues 1 to 23 (MEGSLLVASSTSNNETANTASTD). Positions 8–22 (ASSTSNNETANTAST) are enriched in low complexity.

This sequence belongs to the RNA polymerase beta chain family. As to quaternary structure, the RNAP catalytic core consists of 2 alpha, 1 beta, 1 beta' and 1 omega subunit. When a sigma factor is associated with the core the holoenzyme is formed, which can initiate transcription.

It carries out the reaction RNA(n) + a ribonucleoside 5'-triphosphate = RNA(n+1) + diphosphate. In terms of biological role, DNA-dependent RNA polymerase catalyzes the transcription of DNA into RNA using the four ribonucleoside triphosphates as substrates. The chain is DNA-directed RNA polymerase subunit beta from Paenarthrobacter aurescens (strain TC1).